The primary structure comprises 204 residues: UPF0056 membrane protein CT_852 (204 aa).

Helical transmembrane passes span 9 to 29 (TLLF…IALL), 39 to 59 (HIIL…VTFG), 66 to 86 (LGII…SIAI), 107 to 127 (IFFP…STLG), 138 to 158 (IVLG…LLSS), and 176 to 196 (FGIS…STAF).

The protein belongs to the UPF0056 (MarC) family.

The protein resides in the cell membrane. The protein is UPF0056 membrane protein CT_852 of Chlamydia trachomatis serovar D (strain ATCC VR-885 / DSM 19411 / UW-3/Cx).